The primary structure comprises 1117 residues: Protein ECM21 (1117 aa).

Disordered stretches follow at residues 1 to 48 and 63 to 155; these read MPFI…RRSS and VHSP…YSQI. Residues 11–34 show a composition bias toward polar residues; the sequence is KNSSHSLSETDLNQSKGQPFQPSP. At S18 the chain carries Phosphoserine. The span at 70–81 shows a compositional bias: low complexity; the sequence is NNTTKGGNNNGN. S115 carries the phosphoserine modification. Positions 117–130 are enriched in low complexity; the sequence is SDSATTTPRSSTSD. Residue S140 is modified to Phosphoserine. Residue K191 forms a Glycyl lysine isopeptide (Lys-Gly) (interchain with G-Cter in ubiquitin) linkage. Disordered regions lie at residues 275–312 and 486–523; these read ATTA…ELNT and YRQD…AQAH. S286 is subject to Phosphoserine. The span at 501–519 shows a compositional bias: low complexity; sequence SSSSLSSTTSSLKLTETES. Phosphoserine occurs at positions 527 and 550. Residues K577, K651, and K712 each participate in a glycyl lysine isopeptide (Lys-Gly) (interchain with G-Cter in ubiquitin) cross-link. Phosphoserine is present on S775. Glycyl lysine isopeptide (Lys-Gly) (interchain with G-Cter in ubiquitin) cross-links involve residues K794, K807, and K1024. Disordered regions lie at residues 1016-1065 and 1079-1117; these read RSRF…KDKQ and KDDE…SDEE. A compositionally biased stretch (polar residues) spans 1027-1059; sequence STPSPVNRSHNSSPTNGLSQANGTVRIPNATTE. At S1035 the chain carries Phosphoserine. Residues 1089–1098 are compositionally biased toward low complexity; the sequence is SSSSADSLLS.

The protein belongs to the CSR2 family.

It is found in the cytoplasm. In terms of biological role, may be involved in cell wall organization and biogenesis. In Saccharomyces cerevisiae (strain ATCC 204508 / S288c) (Baker's yeast), this protein is Protein ECM21 (ECM21).